Reading from the N-terminus, the 479-residue chain is MSSTNGSEGDHRLLIVSNRLPITIRRSEGGKYEFSMSSGGLVTGLSGLSKTTTFQWYGWPGLEVPEDELGSVKKRLKDEFNATPVFMDDKLADRHYNGFSNSILWPLLHYHPGEIVFDEGAWDAYREANLLFAKTIVKEAQDGDLIWVQDYHLMLLPELLRAELRAAGKKANKIGFFLHTPFPSSEIYRILPVRGQLLRGVLHCDLIGFHTYDYARHFLSSCSHLLGLVTTPSSVKYEGRSVAVGAFPIGIDPDKFTDGLKSPKVQNRIASLENKFQGTKLMVSVDRLDYIKGIPQKLHALEVFLQNHPEWVGKVVLVQVAVPSRQDVEEYQNLRAVVNELVGRINGKFGTVDYMPIHFMHKSVSFDELIALYAASDACVVSSTRDGMNLVSFEYIATQQKRKGVLILSEFAGAAQSLNGSLVVNPWNTEELARAYHEAVSMSDEQRARKFEKLYKYISKYTSAFWGKSFVAELLQCSS.

D-glucose 6-phosphate-binding residues include tyrosine 96 and aspartate 150. Residues arginine 287 and lysine 292 each contribute to the UDP site. 2 residues coordinate UDP-alpha-D-glucose: arginine 287 and lysine 292. Residue arginine 325 coordinates D-glucose 6-phosphate. UDP is bound by residues 363–364 and 390–394; these read SV and LVSFE. A UDP-alpha-D-glucose-binding site is contributed by 386–394; sequence DGMNLVSFE.

It belongs to the glycosyltransferase 20 family.

The catalysed reaction is D-glucose 6-phosphate + UDP-alpha-D-glucose = alpha,alpha-trehalose 6-phosphate + UDP + H(+). Its pathway is carbohydrate biosynthesis. Its function is as follows. Synthase catalytic subunit of the trehalose synthase complex that catalyzes the production of trehalose from glucose-6-phosphate and UDP-alpha-D-glucose in a two step process. The disaccharide trehalose serves as a storage carbohydrate that is mobilized during conidial germination. Regulates the level of trehalose as a protectant for cell integrity during thermal and oxidative stress. This Aspergillus fumigatus (strain ATCC MYA-4609 / CBS 101355 / FGSC A1100 / Af293) (Neosartorya fumigata) protein is Alpha,alpha-trehalose-phosphate synthase [UDP-forming] 2.